Here is an 80-residue protein sequence, read N- to C-terminus: MDTRFVQAHKEARWALGLTLLYLAVWLVAAYLSGVAPGFTGFPRWFEMACILTPLLFIGLCWAMVKFIYRDIPLEDDDAA.

2 consecutive transmembrane segments (helical) span residues 15–35 (ALGL…LSGV) and 45–65 (WFEM…WAMV).

The protein to H.influenzae HI_0974B.

Its subcellular location is the cell membrane. This is an uncharacterized protein from Escherichia coli (strain K12).